The following is a 164-amino-acid chain: uncharacterized protein (164 aa).

Residues Gly-46–Leu-142 are disordered.

This is an uncharacterized protein from Caenorhabditis elegans.